The sequence spans 314 residues: tRNA pseudouridine synthase B (314 aa).

A substrate-binding site is contributed by H43. The active-site Nucleophile is the D48. 3 residues coordinate substrate: Y76, Y179, and L200.

It belongs to the pseudouridine synthase TruB family. Type 1 subfamily.

It carries out the reaction uridine(55) in tRNA = pseudouridine(55) in tRNA. Functionally, responsible for synthesis of pseudouridine from uracil-55 in the psi GC loop of transfer RNAs. This Citrobacter koseri (strain ATCC BAA-895 / CDC 4225-83 / SGSC4696) protein is tRNA pseudouridine synthase B.